A 218-amino-acid polypeptide reads, in one-letter code: MSAVEWSILPGLSPYRETLEAMENRVAAIRAGEAAEAIWLLEHPPLYTAGTSARPEDLVEPERFPVHVAGRGGQYTYHGPGQRVAYVMLDLDRRGRDVRRFVTALEDWVIATLAEFNVRGERREGRVGVWVVRPDRPAGLDGSPREDKIAAIGVKLRRWVSFHGLSINVEPNLTHFEGIVPCGIREHGVTSLVDLGLPVTMQDLDAALLRTFPQHFPD.

One can recognise a BPL/LPL catalytic domain in the interval 32–218; sequence GEAAEAIWLL…LRTFPQHFPD (187 aa). Substrate-binding positions include 71 to 78, 151 to 153, and 164 to 166; these read RGGQYTYH, AIG, and GLS. C182 acts as the Acyl-thioester intermediate in catalysis.

The protein belongs to the LipB family.

The protein resides in the cytoplasm. The enzyme catalyses octanoyl-[ACP] + L-lysyl-[protein] = N(6)-octanoyl-L-lysyl-[protein] + holo-[ACP] + H(+). It functions in the pathway protein modification; protein lipoylation via endogenous pathway; protein N(6)-(lipoyl)lysine from octanoyl-[acyl-carrier-protein]: step 1/2. In terms of biological role, catalyzes the transfer of endogenously produced octanoic acid from octanoyl-acyl-carrier-protein onto the lipoyl domains of lipoate-dependent enzymes. Lipoyl-ACP can also act as a substrate although octanoyl-ACP is likely to be the physiological substrate. In Cereibacter sphaeroides (strain ATCC 17023 / DSM 158 / JCM 6121 / CCUG 31486 / LMG 2827 / NBRC 12203 / NCIMB 8253 / ATH 2.4.1.) (Rhodobacter sphaeroides), this protein is Octanoyltransferase.